Consider the following 293-residue polypeptide: Nucleotide-binding protein BcerKBAB4_4948 (293 aa).

14–21 (GMSGAGKT) contacts ATP. Residue 65–68 (DLRG) participates in GTP binding.

Belongs to the RapZ-like family.

Functionally, displays ATPase and GTPase activities. The polypeptide is Nucleotide-binding protein BcerKBAB4_4948 (Bacillus mycoides (strain KBAB4) (Bacillus weihenstephanensis)).